Here is a 201-residue protein sequence, read N- to C-terminus: 3-isopropylmalate dehydratase small subunit (201 aa).

This sequence belongs to the LeuD family. LeuD type 1 subfamily. In terms of assembly, heterodimer of LeuC and LeuD.

The catalysed reaction is (2R,3S)-3-isopropylmalate = (2S)-2-isopropylmalate. It functions in the pathway amino-acid biosynthesis; L-leucine biosynthesis; L-leucine from 3-methyl-2-oxobutanoate: step 2/4. Catalyzes the isomerization between 2-isopropylmalate and 3-isopropylmalate, via the formation of 2-isopropylmaleate. The protein is 3-isopropylmalate dehydratase small subunit of Escherichia coli O157:H7.